The sequence spans 302 residues: Dihydroorotate dehydrogenase B (NAD(+)), catalytic subunit (302 aa).

Residues Ser-23 and Lys-47–Gly-48 each bind FMN. Substrate contacts are provided by residues Lys-47 and Asn-71–Leu-75. Residues Asn-101 and Asn-128 each contribute to the FMN site. Asn-128 contributes to the substrate binding site. Cys-131 (nucleophile) is an active-site residue. The FMN site is built by Lys-166 and Ile-192. Residue Asn-193–Thr-194 coordinates substrate. FMN-binding positions include Gly-218, Gly-244–Gly-245, and Gly-266–Thr-267.

This sequence belongs to the dihydroorotate dehydrogenase family. Type 1 subfamily. In terms of assembly, heterotetramer of 2 PyrK and 2 PyrD type B subunits. FMN is required as a cofactor.

Its subcellular location is the cytoplasm. It catalyses the reaction (S)-dihydroorotate + NAD(+) = orotate + NADH + H(+). Its pathway is pyrimidine metabolism; UMP biosynthesis via de novo pathway; orotate from (S)-dihydroorotate (NAD(+) route): step 1/1. In terms of biological role, catalyzes the conversion of dihydroorotate to orotate with NAD(+) as electron acceptor. The protein is Dihydroorotate dehydrogenase B (NAD(+)), catalytic subunit (pyrD) of Alkaliphilus oremlandii (strain OhILAs) (Clostridium oremlandii (strain OhILAs)).